A 356-amino-acid polypeptide reads, in one-letter code: Phosphate acyltransferase (356 aa).

Belongs to the PlsX family. As to quaternary structure, homodimer. Probably interacts with PlsY.

It is found in the cytoplasm. The catalysed reaction is a fatty acyl-[ACP] + phosphate = an acyl phosphate + holo-[ACP]. It participates in lipid metabolism; phospholipid metabolism. In terms of biological role, catalyzes the reversible formation of acyl-phosphate (acyl-PO(4)) from acyl-[acyl-carrier-protein] (acyl-ACP). This enzyme utilizes acyl-ACP as fatty acyl donor, but not acyl-CoA. The chain is Phosphate acyltransferase from Mesorhizobium japonicum (strain LMG 29417 / CECT 9101 / MAFF 303099) (Mesorhizobium loti (strain MAFF 303099)).